We begin with the raw amino-acid sequence, 212 residues long: Uracil-DNA glycosylase (212 aa).

Asp59 functions as the Proton acceptor in the catalytic mechanism.

The protein belongs to the uracil-DNA glycosylase (UDG) superfamily. UNG family.

The protein localises to the cytoplasm. It carries out the reaction Hydrolyzes single-stranded DNA or mismatched double-stranded DNA and polynucleotides, releasing free uracil.. Functionally, excises uracil residues from the DNA which can arise as a result of misincorporation of dUMP residues by DNA polymerase or due to deamination of cytosine. The chain is Uracil-DNA glycosylase from Ureaplasma urealyticum serovar 10 (strain ATCC 33699 / Western).